Consider the following 78-residue polypeptide: Toxin OAIP 5 (78 aa).

A signal peptide spans 1 to 19 (MLIVILTCALLVIYHAAAA). A propeptide spanning residues 20-40 (EELEAKDVIESKALATLDEER) is cleaved from the precursor. Intrachain disulfides connect Cys43/Cys56, Cys47/Cys70, and Cys64/Cys75.

Belongs to the neurotoxin 12 (Hwtx-2) family. 05 (OAIP-5) subfamily. In terms of tissue distribution, expressed by the venom gland.

The protein resides in the secreted. Functionally, probable ion channel inhibitor. Shows insecticidal activity when injected into mealworms. The polypeptide is Toxin OAIP 5 (Selenotypus plumipes (Australian featherleg tarantula)).